The following is a 93-amino-acid chain: YcgL domain-containing protein VV1_0131 (93 aa).

The YcgL domain maps to 1 to 84 (MLCSIYKSSK…PPENLLQQHK (84 aa)). The tract at residues 72 to 93 (LPPPPENLLQQHKERKAQQKND) is disordered.

This chain is YcgL domain-containing protein VV1_0131, found in Vibrio vulnificus (strain CMCP6).